We begin with the raw amino-acid sequence, 88 residues long: Cytochrome c oxidase subunit 6B2 (88 aa).

Positions 1 to 22 (MLDVEAQEPPKGKWSTPPFDPR) are disordered. One can recognise a CHCH domain in the interval 29-75 (IRNCYQNFLDYHRCLKTRTRRGKSTQPCEYYFRVYHSLCPISWVESW). Residues 32–42 (CYQNFLDYHRC) carry the Cx9C motif motif. 2 disulfide bridges follow: Cys32–Cys67 and Cys42–Cys56. The Cx10C motif motif lies at 56–67 (CEYYFRVYHSLC).

The protein belongs to the cytochrome c oxidase subunit 6B family. In terms of assembly, component of the cytochrome c oxidase (complex IV, CIV), a multisubunit enzyme composed of 14 subunits. The complex is composed of a catalytic core of 3 subunits MT-CO1, MT-CO2 and MT-CO3, encoded in the mitochondrial DNA, and 11 supernumerary subunits COX4I1 (or COX4I2), COX5A, COX5B, COX6A1 (or COX6A2), COX6B1 (or COX6B2), COX6C, COX7A2 (or COX7A1), COX7B, COX7C, COX8A and NDUFA4, which are encoded in the nuclear genome. The complex exists as a monomer or a dimer and forms supercomplexes (SCs) in the inner mitochondrial membrane with NADH-ubiquinone oxidoreductase (complex I, CI) and ubiquinol-cytochrome c oxidoreductase (cytochrome b-c1 complex, complex III, CIII), resulting in different assemblies (supercomplex SCI(1)III(2)IV(1) and megacomplex MCI(2)III(2)IV(2)). In terms of tissue distribution, testis specific. Weak expression in thymus and heart. Expressed in cancer cell lines.

It localises to the mitochondrion inner membrane. The protein operates within energy metabolism; oxidative phosphorylation. Functionally, component of the cytochrome c oxidase, the last enzyme in the mitochondrial electron transport chain which drives oxidative phosphorylation. The respiratory chain contains 3 multisubunit complexes succinate dehydrogenase (complex II, CII), ubiquinol-cytochrome c oxidoreductase (cytochrome b-c1 complex, complex III, CIII) and cytochrome c oxidase (complex IV, CIV), that cooperate to transfer electrons derived from NADH and succinate to molecular oxygen, creating an electrochemical gradient over the inner membrane that drives transmembrane transport and the ATP synthase. Cytochrome c oxidase is the component of the respiratory chain that catalyzes the reduction of oxygen to water. Electrons originating from reduced cytochrome c in the intermembrane space (IMS) are transferred via the dinuclear copper A center (CU(A)) of subunit 2 and heme A of subunit 1 to the active site in subunit 1, a binuclear center (BNC) formed by heme A3 and copper B (CU(B)). The BNC reduces molecular oxygen to 2 water molecules using 4 electrons from cytochrome c in the IMS and 4 protons from the mitochondrial matrix. This is Cytochrome c oxidase subunit 6B2 (COX6B2) from Homo sapiens (Human).